The chain runs to 448 residues: Antilisterial bacteriocin subtilosin biosynthesis protein AlbA (448 aa).

The Radical SAM core domain maps to 115–329 (FPMPLHATFE…EQHVIDEFKD (215 aa)). Residues Cys-129, Cys-133, Cys-136, Cys-408, Cys-414, and Cys-417 each contribute to the [4Fe-4S] cluster site.

[4Fe-4S] cluster is required as a cofactor.

The protein localises to the cytoplasm. Functionally, catalyzes the formation of 3 thioether bonds during production of the sactipeptide subtilosin from SboA. In vitro the thioether bonds cannot be made in the absence of the SboA propeptide, suggesting this is the first reaction in subtilosin maturation. In vitro, in the absence of a second substrate, cleaves S-adenosyl-L-methionine into Met and 5'-dA. The sequence is that of Antilisterial bacteriocin subtilosin biosynthesis protein AlbA (albA) from Bacillus subtilis (strain 168).